The chain runs to 336 residues: uncharacterized protein (336 aa).

The protein to bacterial alkanal monooxygenase alpha and beta chains.

This is an uncharacterized protein from Bacillus subtilis (strain 168).